We begin with the raw amino-acid sequence, 327 residues long: MEAIKGSDVNVPDAVFAWMLDGRGGVKPLENTDVIDEAHPCWLHLNYVHHESAQWLATTPLLPNNVRDALAGESTRPRVSRLGEGTLITLRCINGSTDERPDQLVAMRVYMDGRLIVSTRQRKVLALDDVVSDLEEGTGPTDCGGWLVDVCDALTDHSSEFIEQLHDKIIDLEDNLLDQQIPPRGFLALLRKQLIVMRRYMAPQRDVYARLASERLPWMSDDQRRRMQDIADRLGRGLDEIDACIARTGVMADEIAQVMQENLARRTYTMSLMAMVFLPSTFLTGLFGVNLGGIPGGGWQFGFSIFCILLVVLIGGVALWLHRSKWL.

The Cytoplasmic portion of the chain corresponds to 1-273; that stretch reads MEAIKGSDVN…ARRTYTMSLM (273 aa). Residues 274–294 traverse the membrane as a helical segment; that stretch reads AMVFLPSTFLTGLFGVNLGGI. The Periplasmic segment spans residues 295–300; that stretch reads PGGGWQ. The helical transmembrane segment at 301–321 threads the bilayer; that stretch reads FGFSIFCILLVVLIGGVALWL. Residues 322 to 327 are Cytoplasmic-facing; it reads HRSKWL.

This sequence belongs to the CorA metal ion transporter (MIT) (TC 1.A.35) family.

Its subcellular location is the cell inner membrane. It carries out the reaction Zn(2+)(out) + H(+)(out) = Zn(2+)(in) + H(+)(in). Functionally, zinc transporter. Acts as a Zn(2+):proton symporter, which likely mediates zinc ion uptake. The chain is Zinc transport protein ZntB from Escherichia coli O8 (strain IAI1).